We begin with the raw amino-acid sequence, 173 residues long: MEEIQQQQQQQQQQQQQQQQQQQQQQELTQEQIMEFKEAFCLFDKDGDGCITADELATVIRSLDQNPTEQELQDMITEIDSDGNGTIEFSEFLNLMANQLQETDADEELKEAFKVFDKDQNGYISASELRHVMINLGEKLTDEEVDQMIKEADLDGDGQVNYDEFVRMMMING.

A compositionally biased stretch (low complexity) spans 1–26 (MEEIQQQQQQQQQQQQQQQQQQQQQQ). Positions 1 to 27 (MEEIQQQQQQQQQQQQQQQQQQQQQQE) are disordered. EF-hand domains are found at residues 31–66 (EQIM…LDQN), 67–102 (PTEQ…QLQE), 104–139 (DADE…LGEK), and 140–173 (LTDE…MING). Ca(2+) is bound by residues aspartate 44, aspartate 46, aspartate 48, cysteine 50, glutamate 55, aspartate 80, aspartate 82, asparagine 84, threonine 86, glutamate 91, aspartate 117, aspartate 119, asparagine 121, tyrosine 123, glutamate 128, aspartate 153, aspartate 155, aspartate 157, glutamine 159, and glutamate 164.

This sequence belongs to the calmodulin family.

In terms of biological role, potential calcium sensor. This is Calmodulin-like protein 11 (CML11) from Arabidopsis thaliana (Mouse-ear cress).